The primary structure comprises 181 residues: MRVVLLGPPGAGKGTQAQLISEKFGIPQISTGDLFRSNISEGTELGLQAKQYLDAGDLVPSEVTNKMVEARLDEPDAAAGFILDGFPRTVDQADALAAMEEARGVTIDAVLEFRVPVEELVQRLLGRGRADDTEDIIRNRLNVYRDETAPLLEYYQNVLQTIDAVGTVDEVFARTSQALGR.

An ATP-binding site is contributed by 10–15; that stretch reads GAGKGT. Residues 30 to 59 are NMP; the sequence is STGDLFRSNISEGTELGLQAKQYLDAGDLV. AMP contacts are provided by residues Thr-31, Arg-36, 57 to 59, 85 to 88, and Gln-92; these read DLV and GFPR. An LID region spans residues 126–132; that stretch reads GRGRADD. Arg-127 contributes to the ATP binding site. AMP-binding residues include Arg-129 and Arg-140. Gly-166 contributes to the ATP binding site.

It belongs to the adenylate kinase family. Monomer.

It is found in the cytoplasm. The catalysed reaction is AMP + ATP = 2 ADP. The protein operates within purine metabolism; AMP biosynthesis via salvage pathway; AMP from ADP: step 1/1. Catalyzes the reversible transfer of the terminal phosphate group between ATP and AMP. Plays an important role in cellular energy homeostasis and in adenine nucleotide metabolism. The protein is Adenylate kinase of Mycobacteroides abscessus (strain ATCC 19977 / DSM 44196 / CCUG 20993 / CIP 104536 / JCM 13569 / NCTC 13031 / TMC 1543 / L948) (Mycobacterium abscessus).